A 387-amino-acid polypeptide reads, in one-letter code: Alpha-2B adrenergic receptor (387 aa).

A helical transmembrane segment spans residues 1–25 (AIAAVITFLILFTIFGNALVILAVL). At 26–36 (TSRSLRAPQNL) the chain is on the cytoplasmic side. The chain crosses the membrane as a helical span at residues 37-62 (FLVSLAAADILVATLIIPFSLANELL). Over 63 to 72 (GYWYFRHTWC) the chain is Extracellular. A disulfide bond links cysteine 72 and cysteine 151. The helical transmembrane segment at 73-95 (XVYLALDVLFCTSSIVHLCAISL) threads the bilayer. Residues 96 to 117 (DRYWAVSRALEYNSKRTPRRIK) lie on the Cytoplasmic side of the membrane. A helical transmembrane segment spans residues 118-140 (CIILTVWLIAAAISLPPLIYKGD). At 141 to 156 (QDPQPRGRPQCKLNQE) the chain is on the extracellular side. A helical transmembrane segment spans residues 157 to 180 (AWYILSSSIGSFFVPCLIMILVYL). Topologically, residues 181–351 (RIYLIAKRSS…LTREKRFTFV (171 aa)) are cytoplasmic. Positions 193–303 (RKPRAKGXPR…VPASPALACS (111 aa)) are disordered. Residues 279–290 (PEEEAEEEEECG) show a composition bias toward acidic residues. The helical transmembrane segment at 352 to 375 (LAVVIGVFVLCWFPFFFSYSLGAI) threads the bilayer. At 376 to 384 (CPQHCKVPH) the chain is on the extracellular side. The helical transmembrane segment at 385-387 (GLF) threads the bilayer.

Belongs to the G-protein coupled receptor 1 family. Adrenergic receptor subfamily. ADRA2B sub-subfamily. As to quaternary structure, interacts with RAB26. Interacts with PPP1R9B. Interacts with GGA1, GGA2 and GGA3.

The protein localises to the cell membrane. Its function is as follows. Alpha-2 adrenergic receptors mediate the catecholamine-induced inhibition of adenylate cyclase through the action of G proteins. In Macroscelides proboscideus (Short-eared elephant shrew), this protein is Alpha-2B adrenergic receptor (ADRA2B).